A 236-amino-acid chain; its full sequence is Leucyl/phenylalanyl-tRNA--protein transferase (236 aa).

Belongs to the L/F-transferase family.

Its subcellular location is the cytoplasm. It carries out the reaction N-terminal L-lysyl-[protein] + L-leucyl-tRNA(Leu) = N-terminal L-leucyl-L-lysyl-[protein] + tRNA(Leu) + H(+). The catalysed reaction is N-terminal L-arginyl-[protein] + L-leucyl-tRNA(Leu) = N-terminal L-leucyl-L-arginyl-[protein] + tRNA(Leu) + H(+). It catalyses the reaction L-phenylalanyl-tRNA(Phe) + an N-terminal L-alpha-aminoacyl-[protein] = an N-terminal L-phenylalanyl-L-alpha-aminoacyl-[protein] + tRNA(Phe). In terms of biological role, functions in the N-end rule pathway of protein degradation where it conjugates Leu, Phe and, less efficiently, Met from aminoacyl-tRNAs to the N-termini of proteins containing an N-terminal arginine or lysine. The protein is Leucyl/phenylalanyl-tRNA--protein transferase of Shewanella pealeana (strain ATCC 700345 / ANG-SQ1).